Consider the following 733-residue polypeptide: DNA-binding protein SATB2 (733 aa).

The segment at Met1–Pro47 is disordered. Phosphoserine is present on Ser20. Residues Lys24 and Lys30 each participate in a glycyl lysine isopeptide (Lys-Gly) (interchain with G-Cter in SUMO2) cross-link. Phosphoserine is present on Ser39. A CMP domain is found at Gly57–Ser158. Residue Lys161 forms a Glycyl lysine isopeptide (Lys-Gly) (interchain with G-Cter in SUMO2) linkage. Residues Lys161–Val234 form the CUTL domain. Lys233 is covalently cross-linked (Glycyl lysine isopeptide (Lys-Gly) (interchain with G-Cter in SUMO)). Lys350 participates in a covalent cross-link: Glycyl lysine isopeptide (Lys-Gly) (interchain with G-Cter in SUMO); alternate. A Glycyl lysine isopeptide (Lys-Gly) (interchain with G-Cter in SUMO2); alternate cross-link involves residue Lys350. Positions Lys350 to Arg437 form a DNA-binding region, CUT 1. The disordered stretch occupies residues Asp435–Pro473. Residues Met441–Ser458 are compositionally biased toward low complexity. Ser454 carries the post-translational modification Phosphoserine. Positions Arg459–Thr470 are enriched in polar residues. A Phosphothreonine modification is found at Thr467. The segment at residues Pro473–Ser560 is a DNA-binding region (CUT 2). A Glycyl lysine isopeptide (Lys-Gly) (interchain with G-Cter in SUMO2) cross-link involves residue Lys475. A compositionally biased stretch (low complexity) spans Gln580–Ser593. Disordered regions lie at residues Gln580 to Ser617 and Leu694 to Arg733. Position 594 is a phosphoserine (Ser594). Positions Pro615–Gly674 form a DNA-binding region, homeobox. Residues Leu694–Glu708 are compositionally biased toward acidic residues. The segment covering Glu709–Arg733 has biased composition (basic and acidic residues). Lys724 participates in a covalent cross-link: Glycyl lysine isopeptide (Lys-Gly) (interchain with G-Cter in SUMO2).

It belongs to the CUT homeobox family. In terms of assembly, interacts with ATF4 and RUNX2; resulting in enhanced DNA binding and transactivation by these transcription factors. Interacts with PIAS1. Post-translationally, sumoylated by PIAS1. Sumoylation promotes nuclear localization, but represses transcription factor activity. In terms of tissue distribution, high expression in adult brain, moderate expression in fetal brain, and weak expression in adult liver, kidney, and spinal cord and in select brain regions, including amygdala, corpus callosum, caudate nucleus, and hippocampus.

It localises to the nucleus matrix. Functionally, binds to DNA, at nuclear matrix- or scaffold-associated regions. Thought to recognize the sugar-phosphate structure of double-stranded DNA. Transcription factor controlling nuclear gene expression, by binding to matrix attachment regions (MARs) of DNA and inducing a local chromatin-loop remodeling. Acts as a docking site for several chromatin remodeling enzymes and also by recruiting corepressors (HDACs) or coactivators (HATs) directly to promoters and enhancers. Required for the initiation of the upper-layer neurons (UL1) specific genetic program and for the inactivation of deep-layer neurons (DL) and UL2 specific genes, probably by modulating BCL11B expression. Repressor of Ctip2 and regulatory determinant of corticocortical connections in the developing cerebral cortex. May play an important role in palate formation. Acts as a molecular node in a transcriptional network regulating skeletal development and osteoblast differentiation. This is DNA-binding protein SATB2 (SATB2) from Homo sapiens (Human).